We begin with the raw amino-acid sequence, 505 residues long: Probable alpha-L-arabinofuranosidase C (505 aa).

3 N-linked (GlcNAc...) asparagine glycosylation sites follow: Asn152, Asn269, and Asn438.

This sequence belongs to the glycosyl hydrolase 51 family.

Its subcellular location is the secreted. It carries out the reaction Hydrolysis of terminal non-reducing alpha-L-arabinofuranoside residues in alpha-L-arabinosides.. Its pathway is glycan metabolism; L-arabinan degradation. Its function is as follows. Alpha-L-arabinofuranosidase involved in the degradation of arabinoxylan, a major component of plant hemicellulose. Acts only on small linear 1,5-alpha-linked L-arabinofuranosyl oligosaccharides. The sequence is that of Probable alpha-L-arabinofuranosidase C (abfC) from Aspergillus clavatus (strain ATCC 1007 / CBS 513.65 / DSM 816 / NCTC 3887 / NRRL 1 / QM 1276 / 107).